The chain runs to 327 residues: Glycerol-3-phosphate dehydrogenase [NAD(P)+] (327 aa).

Residues Trp13, His33, and Lys102 each coordinate NADPH. Residues Lys102, Gly130, and Ser132 each coordinate sn-glycerol 3-phosphate. Ala134 provides a ligand contact to NADPH. Residues Lys185, Asp238, Ser248, Arg249, and Asn250 each contribute to the sn-glycerol 3-phosphate site. The active-site Proton acceptor is the Lys185. Residue Arg249 coordinates NADPH. Residue Glu275 coordinates NADPH.

It belongs to the NAD-dependent glycerol-3-phosphate dehydrogenase family.

It localises to the cytoplasm. It catalyses the reaction sn-glycerol 3-phosphate + NAD(+) = dihydroxyacetone phosphate + NADH + H(+). The catalysed reaction is sn-glycerol 3-phosphate + NADP(+) = dihydroxyacetone phosphate + NADPH + H(+). Its pathway is membrane lipid metabolism; glycerophospholipid metabolism. Functionally, catalyzes the reduction of the glycolytic intermediate dihydroxyacetone phosphate (DHAP) to sn-glycerol 3-phosphate (G3P), the key precursor for phospholipid synthesis. The chain is Glycerol-3-phosphate dehydrogenase [NAD(P)+] from Vesicomyosocius okutanii subsp. Calyptogena okutanii (strain HA).